Consider the following 269-residue polypeptide: 4-hydroxy-tetrahydrodipicolinate reductase (269 aa).

NAD(+) contacts are provided by residues Gly8–Met13 and Glu34. Arg35 provides a ligand contact to NADP(+). Residues Gly98–Thr100 and Ala122–Tyr125 each bind NAD(+). Residue His155 is the Proton donor/acceptor of the active site. His156 is a (S)-2,3,4,5-tetrahydrodipicolinate binding site. Residue Lys159 is the Proton donor of the active site. Residue Gly165 to Thr166 participates in (S)-2,3,4,5-tetrahydrodipicolinate binding.

Belongs to the DapB family.

It is found in the cytoplasm. It carries out the reaction (S)-2,3,4,5-tetrahydrodipicolinate + NAD(+) + H2O = (2S,4S)-4-hydroxy-2,3,4,5-tetrahydrodipicolinate + NADH + H(+). The enzyme catalyses (S)-2,3,4,5-tetrahydrodipicolinate + NADP(+) + H2O = (2S,4S)-4-hydroxy-2,3,4,5-tetrahydrodipicolinate + NADPH + H(+). The protein operates within amino-acid biosynthesis; L-lysine biosynthesis via DAP pathway; (S)-tetrahydrodipicolinate from L-aspartate: step 4/4. Its function is as follows. Catalyzes the conversion of 4-hydroxy-tetrahydrodipicolinate (HTPA) to tetrahydrodipicolinate. This is 4-hydroxy-tetrahydrodipicolinate reductase from Aliivibrio fischeri (strain ATCC 700601 / ES114) (Vibrio fischeri).